The sequence spans 631 residues: Peptide-N(4)-(N-acetyl-beta-glucosaminyl)asparagine amidase (631 aa).

In terms of domain architecture, PUB spans glutamate 34–threonine 97. At serine 126 the chain carries Phosphoserine. Zn(2+)-binding residues include cysteine 246, cysteine 249, cysteine 272, and cysteine 273. Cysteine 296 functions as the Nucleophile in the catalytic mechanism. Residues histidine 323 and aspartate 340 contribute to the active site. The PAW domain maps to glutamate 441–histidine 631.

It belongs to the transglutaminase-like superfamily. PNGase family. Requires Zn(2+) as cofactor.

Its subcellular location is the cytoplasm. The enzyme catalyses Hydrolysis of an N(4)-(acetyl-beta-D-glucosaminyl)asparagine residue in which the glucosamine residue may be further glycosylated, to yield a (substituted) N-acetyl-beta-D-glucosaminylamine and a peptide containing an aspartate residue.. Its function is as follows. Specifically deglycosylates the denatured form of N-linked glycoproteins in the cytoplasm and assists their proteasome-mediated degradation. Cleaves the beta-aspartyl-glucosamine (GlcNAc) of the glycan and the amide side chain of Asn, converting Asn to Asp. Prefers proteins containing high-mannose over those bearing complex type oligosaccharides. Can recognize misfolded proteins in the endoplasmic reticulum that are exported to the cytosol to be destroyed and deglycosylate them, while it has no activity toward native proteins. Deglycosylation is a prerequisite for subsequent proteasome-mediated degradation of some, but not all, misfolded glycoproteins. In Drosophila melanogaster (Fruit fly), this protein is Peptide-N(4)-(N-acetyl-beta-glucosaminyl)asparagine amidase (Pngl).